The sequence spans 136 residues: ATP synthase F(0) complex subunit C1, mitochondrial (136 aa).

The transit peptide at 1–61 (MQTTGALLIS…REFQTSVVSR (61 aa)) directs the protein to the mitochondrion. The helical transmembrane segment at 77-97 (VGVAGSGAGIGTVFGSLIIGY) threads the bilayer. Lys-104 carries the N6,N6,N6-trimethyllysine modification. Residues 112–132 (ILGFALSEAMGLFCLMVAFLI) traverse the membrane as a helical segment.

It belongs to the ATPase C chain family. In terms of assembly, homooctamer; the c-ring consists of eight c subunits forming a circle, and each subunit adopts a hairpin shape. Component of the ATP synthase complex composed at least of ATP5F1A/subunit alpha, ATP5F1B/subunit beta, ATP5MC1/subunit c (homooctomer), MT-ATP6/subunit a, MT-ATP8/subunit 8, ATP5ME/subunit e, ATP5MF/subunit f, ATP5MG/subunit g, ATP5MK/subunit k, ATP5MJ/subunit j, ATP5F1C/subunit gamma, ATP5F1D/subunit delta, ATP5F1E/subunit epsilon, ATP5PF/subunit F6, ATP5PB/subunit b, ATP5PD/subunit d, ATP5PO/subunit OSCP. ATP synthase complex consists of a soluble F(1) head domain (subunits alpha(3) and beta(3)) - the catalytic core - and a membrane F(0) domain - the membrane proton channel (subunits c, a, 8, e, f, g, k and j). These two domains are linked by a central stalk (subunits gamma, delta, and epsilon) rotating inside the F1 region and a stationary peripheral stalk (subunits F6, b, d, and OSCP). Interacts with TMEM70 (homooligomer form); this interaction facilitates the oligomer formation of subunit c/ATP5MC1 (c-ring) and the c-ring membrane insertion and also protects ATP5MC1 against intramitochondrial proteolysis. Trimethylated by ATPSCKMT at Lys-104. Methylation is required for proper incorporation of the C subunit into the ATP synthase complex and mitochondrial respiration.

The protein localises to the mitochondrion membrane. It carries out the reaction H(+)(in) = H(+)(out). Subunit c, of the mitochondrial membrane ATP synthase complex (F(1)F(0) ATP synthase or Complex V) that produces ATP from ADP in the presence of a proton gradient across the membrane which is generated by electron transport complexes of the respiratory chain. ATP synthase complex consist of a soluble F(1) head domain - the catalytic core - and a membrane F(1) domain - the membrane proton channel. These two domains are linked by a central stalk rotating inside the F(1) region and a stationary peripheral stalk. During catalysis, ATP synthesis in the catalytic domain of F(1) is coupled via a rotary mechanism of the central stalk subunits to proton translocation. With the subunit a (MT-ATP6), forms the proton-conducting channel in the F(0) domain, that contains two crucial half-channels (inlet and outlet) that facilitate proton movement from the mitochondrial intermembrane space (IMS) into the matrix. Protons are taken up via the inlet half-channel and released through the outlet half-channel, following a Grotthuss mechanism. The protein is ATP synthase F(0) complex subunit C1, mitochondrial of Bos taurus (Bovine).